Consider the following 169-residue polypeptide: Allophycocyanin subunit beta-18 (169 aa).

Asparagine 72 carries the N4-methylasparagine modification. Cysteine 82 provides a ligand contact to (2R,3E)-phycocyanobilin.

It belongs to the phycobiliprotein family. Heterodimer of ApcE and this beta chain. Post-translationally, contains one covalently linked bilin chromophore. The chromophore is added by phycocyanobilin lyase CpcS 1.

It localises to the cellular thylakoid membrane. In terms of biological role, a variant beta-allophycocyanin (AP) which forms a complex with ApcE, a phycobilisome terminal emitter that influences energy transfer to photosystem II. This is Allophycocyanin subunit beta-18 (apcF) from Nostoc sp. (strain PCC 7120 / SAG 25.82 / UTEX 2576).